The chain runs to 95 residues: Secretoglobin family 2A member 1 (95 aa).

The signal sequence occupies residues 1-18 (MKLVFLFLLVTIPICCYA). Asn35 and Asn72 each carry an N-linked (GlcNAc...) asparagine glycan.

This sequence belongs to the secretoglobin family. Lipophilin subfamily. Prostatein is composed of three different peptides called C1, C2 and C3. These form covalent C1:C3 (F) and C2:C3 (S) heterodimers whose non-covalent association forms tetrameric (C1:C3/C3:C2) prostatein molecules. In terms of tissue distribution, expressed at very low level in ventral prostate.

It is found in the secreted. Its function is as follows. Part of prostatein which is the major secretory glycoprotein of ventral prostate gland. Steroid-binding protein; can bind non-polar steroids, cholesterol and a group of small proline-rich peptides. The chain is Secretoglobin family 2A member 1 from Rattus norvegicus (Rat).